We begin with the raw amino-acid sequence, 476 residues long: Arginine biosynthesis bifunctional protein ArgJ, mitochondrial (476 aa).

Residues threonine 204, lysine 233, threonine 244, glutamate 331, asparagine 471, and threonine 476 each contribute to the substrate site. The active-site Nucleophile is threonine 244.

This sequence belongs to the ArgJ family. As to quaternary structure, heterodimer of an alpha and a beta chain. Post-translationally, the alpha and beta chains are autoproteolytically processed from a single precursor protein within the mitochondrion.

The protein localises to the mitochondrion matrix. It catalyses the reaction N(2)-acetyl-L-ornithine + L-glutamate = N-acetyl-L-glutamate + L-ornithine. It carries out the reaction L-glutamate + acetyl-CoA = N-acetyl-L-glutamate + CoA + H(+). The protein operates within amino-acid biosynthesis; L-arginine biosynthesis; L-ornithine and N-acetyl-L-glutamate from L-glutamate and N(2)-acetyl-L-ornithine (cyclic): step 1/1. Its pathway is amino-acid biosynthesis; L-arginine biosynthesis; N(2)-acetyl-L-ornithine from L-glutamate: step 1/4. In terms of biological role, catalyzes two activities which are involved in the cyclic version of arginine biosynthesis: the synthesis of acetylglutamate from glutamate and acetyl-CoA, and of ornithine by transacetylation between acetylornithine and glutamate. The polypeptide is Arginine biosynthesis bifunctional protein ArgJ, mitochondrial (Arthroderma otae (strain ATCC MYA-4605 / CBS 113480) (Microsporum canis)).